The sequence spans 154 residues: Lipoprotein signal peptidase (154 aa).

2 helical membrane-spanning segments follow: residues 52–72 (ILAG…IGIV) and 85–105 (LGVA…DRAV). Active-site residues include aspartate 111 and aspartate 129. The chain crosses the membrane as a helical span at residues 124 to 144 (IFNIADSSLCVGVMLLFIQML).

Belongs to the peptidase A8 family.

Its subcellular location is the cell membrane. It catalyses the reaction Release of signal peptides from bacterial membrane prolipoproteins. Hydrolyzes -Xaa-Yaa-Zaa-|-(S,diacylglyceryl)Cys-, in which Xaa is hydrophobic (preferably Leu), and Yaa (Ala or Ser) and Zaa (Gly or Ala) have small, neutral side chains.. The protein operates within protein modification; lipoprotein biosynthesis (signal peptide cleavage). Its function is as follows. This protein specifically catalyzes the removal of signal peptides from prolipoproteins. The chain is Lipoprotein signal peptidase from Bacillus subtilis (strain 168).